Reading from the N-terminus, the 327-residue chain is MLVLRILSRVTRNAGIRSSLSAVTLPARNQTPVFSSRFHSLAHDFSHKLVPAQMSMMDSFALQRFNFSSSTSPESDEKKTHTEASKTSEEKPTAEANQPGLDSESKDSVTDSAKRKRKGAKGAASSSSESDSESDDDELSADDLVKLVAEKEELLSEKEEEIKQLKDKVLRTYAEMENVMDRTRRDAENTKKYAVQNFAKSLLDVADNLGRASSVVKESFSKLDTSEDSAGAAPLLKTLLEGVEMTEKQLAEVFKKFGMEKYDPINEPFDPNRHNAVFQVPDASKPEGTVAHVLKSGYTLYDRVIRPAEVGVTQGGENQEEKKESDA.

The N-terminal 39 residues, 1–39 (MLVLRILSRVTRNAGIRSSLSAVTLPARNQTPVFSSRFH), are a transit peptide targeting the mitochondrion. The segment at 68 to 140 (SSSTSPESDE…DSESDDDELS (73 aa)) is disordered. Basic and acidic residues-rich tracts occupy residues 75 to 93 (SDEK…EKPT) and 103 to 113 (SESKDSVTDSA). A compositionally biased stretch (acidic residues) spans 130-140 (SDSESDDDELS).

It belongs to the GrpE family. Probable component of the PAM complex, at least composed of SSC1 (mtHsp70), MGE1, TIM44, PAM16/TIM16, PAM17 and PAM18/TIM14. Interacts with SSQ1.

Its subcellular location is the mitochondrion matrix. In terms of biological role, essential component of the PAM complex, a complex required for the translocation of transit peptide-containing proteins from the inner membrane into the mitochondrial matrix in an ATP-dependent manner. Seems to control the nucleotide-dependent binding of mitochondrial HSP70 to substrate proteins. Binds ATP. Interacts with copper ions Cu(2+). Confers thermotolerance to long-term exposure at moderately high temperature (TMHT at 35 degrees Celsius). The sequence is that of GrpE protein homolog 2, mitochondrial from Arabidopsis thaliana (Mouse-ear cress).